Here is a 636-residue protein sequence, read N- to C-terminus: MPIINFNNKEILFNYPISIIEIIKKFDKNLSENCIAAKINGKLLDVSEIINYDGSLELVKPENKIGIRIIRCSCSHLLGYAIKQLWPTSKMATNNITENGFYYDIDLNHKLSKNDLKLIEKKMHQLLKINFKINKINVTWGKAYEMFKNLNEIYKIKILEDNISKNSSLYIYHQEQYVDLCTLPHVPNIKFCMFFKIQKISGAYWKGNKKNKMLQRIYVTSWDSNSKLKNFIKNIKELEHRDHRKIGKKLDLFHIYENSPGMVFWHHNGWIIFRILEKFIRKKLKKFYYQEVKTPCIIDHDLWRLSGHLDNYKNYMFHTNSENKQYCIKPMNCPAHVLIFKKKIRSYKELPFRISEFGSCHRNEPSGSLHGLMRIRNFTQDDAHIFCMHDQILSEVSSCIKMIYEVYSCFGFKKILVKLSTRPENRIGSDEIWDFAEKQLELSLKKNKILFKIDLNEGAFYGPKIEFTLLDSLNRKWQCGTIQLDLCLANKLQAYYINNKNEKTNPVIIHRAILGSMERFIGIITEEFSGKYPLWISPIQVGVINVSVDQIDYVKKITKFFLQKKIRIISDLRNEKISFKIREYTLRFIPYIIICGKKEMESNSISVRNKYGKQLKYSSLEKFYNVIYEEIKQKKT.

One can recognise a TGS domain in the interval 1 to 60; the sequence is MPIINFNNKEILFNYPISIIEIIKKFDKNLSENCIAAKINGKLLDVSEIINYDGSLELVK. A catalytic region spans residues 242–533; the sequence is DHRKIGKKLD…ITEEFSGKYP (292 aa). Positions 333, 384, and 510 each coordinate Zn(2+).

The protein belongs to the class-II aminoacyl-tRNA synthetase family. In terms of assembly, homodimer. Requires Zn(2+) as cofactor.

The protein resides in the cytoplasm. It carries out the reaction tRNA(Thr) + L-threonine + ATP = L-threonyl-tRNA(Thr) + AMP + diphosphate + H(+). In terms of biological role, catalyzes the attachment of threonine to tRNA(Thr) in a two-step reaction: L-threonine is first activated by ATP to form Thr-AMP and then transferred to the acceptor end of tRNA(Thr). Also edits incorrectly charged L-seryl-tRNA(Thr). This Wigglesworthia glossinidia brevipalpis protein is Threonine--tRNA ligase.